The sequence spans 93 residues: UPF0473 protein BH1270 (93 aa).

It belongs to the UPF0473 family.

In Halalkalibacterium halodurans (strain ATCC BAA-125 / DSM 18197 / FERM 7344 / JCM 9153 / C-125) (Bacillus halodurans), this protein is UPF0473 protein BH1270.